We begin with the raw amino-acid sequence, 518 residues long: Motile sperm domain-containing protein 2 (518 aa).

The Cytoplasmic portion of the chain corresponds to Met-1–Gln-496. The 155-residue stretch at Ile-85–Tyr-239 folds into the CRAL-TRIO domain. Residues Pro-252–Lys-312 form a disordered region. Basic and acidic residues-rich tracts occupy residues Thr-265–Leu-279 and Val-300–Lys-312. Residues Leu-327–Val-445 form the MSP domain. The segment at Arg-365 to Thr-366 is required for FFAT motif binding and phosphorylated FFAT motif binding. Residues Leu-497–Asn-518 traverse the membrane as a helical; Anchor for type IV membrane protein segment.

As to quaternary structure, homooligomer. Interacts (via MSP domain) with STARD3NL (via FFAT motif), RMDN3 (via FFAT motif), OSBPL1A (via FFAT motif) and CERT1 (via FFAT motif). Interacts (via MSP domain) with STARD3 (via phosphorylated FFAT motif); this interaction depends on the critical phosphorylation of STARD3 on 'Ser-209'. Interacts with RB1CC1 (via phosphorylated FFAT motif), MIGA2 (via phosphorylated FFAT motif) and OSBPL1A (via FFAT motif).

The protein localises to the endoplasmic reticulum membrane. Functionally, endoplasmic reticulum-anchored protein that mediates the formation of contact sites between the endoplasmic (ER) and endosomes, mitochondria or Golgi through interaction with conventional- and phosphorylated-FFAT-containing organelle-bound proteins. In addition, forms endoplasmic reticulum (ER)-lipid droplets (LDs) contacts through a direct protein-membrane interaction and participates in LDs homeostasis. The attachment mechanism involves an amphipathic helix that has an affinity for lipid packing defects present at the surface of LDs. Promotes migration of primary monocytes and neutrophils, in response to various chemokines. This is Motile sperm domain-containing protein 2 from Mus musculus (Mouse).